The chain runs to 238 residues: N-methyltransferase vrtF (238 aa).

This sequence belongs to the methyltransferase superfamily.

Its pathway is secondary metabolite biosynthesis; terpenoid biosynthesis. N-methyltransferase; part of the gene cluster that mediates the biosynthesis of viridicatumtoxin, a tetracycline-like fungal meroterpenoid with a unique, fused spirobicyclic ring system. The first step of the pathway is the production of the malonamoyl-CoA starter unit for the polyketide synthase vrtA. The aldolase vrtJ may be involved in the synthesis of the malonamate substrate for malonamoyl-CoA synthetase vrtB. The polyketide synthase vrtA then may utilize the malonamoyl-CoA starter unit, followed by sequential condensation of eight malonyl-CoA units to form the polyketide backbone. The cyclization of the last ring could be mediated by the lactamase-like protein vrtG. The proposed post-PKS tailoring steps are a hydroxylation at C5 catalyzed the cytochrome P450 monooxygenase vrtE, a hydroxylation at C12a catalyzed by VrtH and/or VrtI, and an O-methylation by the O-methyltransferase vrtF. VrtC is then proposed to catalyze the transfer of a geranyl group synthesized by vrtD to the aromatic C ring of the tetracyclic polyketide intermediate of viridicatumtoxin to yield previridicatumtoxin. Finally, the cytochrome P450 monooxygenase vrtK catalyzes the spirocyclization of the geranyl moiety of previridicatumtoxin to afford viridicatumtoxin. The protein is N-methyltransferase vrtF of Penicillium aethiopicum.